The chain runs to 309 residues: Minor serine/threonine-protein phosphatase PP2A-1 catalytic subunit (309 aa).

Residues aspartate 57, histidine 59, aspartate 85, and asparagine 117 each coordinate Mn(2+). Catalysis depends on histidine 118, which acts as the Proton donor. Mn(2+)-binding residues include histidine 167 and histidine 241. Leucine methyl ester is present on leucine 309.

It belongs to the PPP phosphatase family. PP-2A subfamily. Mn(2+) is required as a cofactor.

It catalyses the reaction O-phospho-L-seryl-[protein] + H2O = L-seryl-[protein] + phosphate. The enzyme catalyses O-phospho-L-threonyl-[protein] + H2O = L-threonyl-[protein] + phosphate. In terms of biological role, essential role in cell cycle control. PP2A may be involved in controlling the entry into mitosis, possibly acting as an inhibitor. This chain is Minor serine/threonine-protein phosphatase PP2A-1 catalytic subunit (ppa1), found in Schizosaccharomyces pombe (strain 972 / ATCC 24843) (Fission yeast).